The following is a 1080-amino-acid chain: Presequence protease 1, chloroplastic/mitochondrial (1080 aa).

The transit peptide at 1-85 (MLRTVSCLAS…GQFSRLSVRA (85 aa)) directs the protein to the chloroplast and mitochondrion. An N-acetylvaline modification is found at Val-86. Position 162 (His-162) interacts with Zn(2+). The active-site Proton acceptor is Glu-165. His-166 is a binding site for Zn(2+). The active site involves Glu-240. Glu-262 provides a ligand contact to Zn(2+). Residues 571–612 (EKATQEEVEEKNILEKVKAAMTEEDLAELARATEELKLKQET) adopt a coiled-coil conformation. Residue Arg-705 coordinates Mg(2+).

This sequence belongs to the peptidase M16 family. PreP subfamily. As to quaternary structure, homodimer. Requires Zn(2+) as cofactor. It depends on Mg(2+) as a cofactor. Expressed only in siliques and flowers.

It is found in the plastid. Its subcellular location is the chloroplast stroma. The protein resides in the mitochondrion matrix. Inactive in the absence of MgCl(2) and CaCl(2) and full activation at 10 mM concentrations of either ion. Completely inhibited by the metal chelator orthophenanthroline, but not affected by phenylmethylsulfonyl fluoride (PMSF) or N-ethylmaleimide (NEM). In terms of biological role, ATP-independent protease that degrades both mitochondrial and chloroplastic transit peptides after their cleavage. Also degrades other unstructured peptides. Specific for peptides in the range of 10 to 65 residues. Shows a preference for cleavage after small polar residues and before basic residues, with a bias for positively charged amino acid residues. In Arabidopsis thaliana (Mouse-ear cress), this protein is Presequence protease 1, chloroplastic/mitochondrial (PREP1).